The chain runs to 271 residues: Indole-3-glycerol phosphate synthase (271 aa).

It belongs to the TrpC family.

The enzyme catalyses 1-(2-carboxyphenylamino)-1-deoxy-D-ribulose 5-phosphate + H(+) = (1S,2R)-1-C-(indol-3-yl)glycerol 3-phosphate + CO2 + H2O. The protein operates within amino-acid biosynthesis; L-tryptophan biosynthesis; L-tryptophan from chorismate: step 4/5. This is Indole-3-glycerol phosphate synthase from Lachnoclostridium phytofermentans (strain ATCC 700394 / DSM 18823 / ISDg) (Clostridium phytofermentans).